The following is a 495-amino-acid chain: Ectonucleoside triphosphate diphosphohydrolase 2 (495 aa).

Residues 1-4 are Cytoplasmic-facing; it reads MAGK. Residues 5 to 25 form a helical membrane-spanning segment; sequence LVSLVPPLLLAAAGLTGLLLL. At 26–462 the chain is on the extracellular side; the sequence is CVPTQDVREP…PGLRKGTHFS (437 aa). N64 carries an N-linked (GlcNAc...) asparagine glycan. C75 and C99 are joined by a disulfide. The N-linked (GlcNAc...) asparagine glycan is linked to N129. E165 serves as the catalytic Proton acceptor. 204–208 contacts ATP; it reads GASTQ. Cystine bridges form between C242-C284 and C265-C310. N294, N306, and N319 each carry an N-linked (GlcNAc...) asparagine glycan. 2 cysteine pairs are disulfide-bonded: C323–C328 and C377–C399. N-linked (GlcNAc...) asparagine glycosylation is found at N378 and N443. A helical membrane pass occupies residues 463-483; sequence SWVALLLLFTVLILAALVLLL. The Cytoplasmic segment spans residues 484-495; that stretch reads RQVRSAKSPGAL.

This sequence belongs to the GDA1/CD39 NTPase family. Ca(2+) is required as a cofactor. It depends on Mg(2+) as a cofactor. In terms of tissue distribution, expressed in brain, heart, vas deferens, kidney, skeletal muscle, thymus, lung and spleen. Weak expression in liver.

Its subcellular location is the cell membrane. In the nervous system, could hydrolyze ATP and other nucleotides to regulate purinergic neurotransmission. Hydrolyzes ADP only to a marginal extent. This Rattus norvegicus (Rat) protein is Ectonucleoside triphosphate diphosphohydrolase 2 (Entpd2).